The sequence spans 531 residues: Ceramide kinase (531 aa).

The segment at 1–115 (MGAMGAAEPL…SADEQLCHLW (115 aa)) is essential for enzyme activity. The segment at 1–125 (MGAMGAAEPL…LQTLRGLLES (125 aa)) is required for binding to sulfatide and phosphoinositides. Residues 128-278 (SRPKHLLVFI…IDVSSVHYHN (151 aa)) enclose the DAGKc domain. Residues 138–140 (NPF) and 170–174 (TEHAN) contribute to the ATP site. 195–198 (GGDG) serves as a coordination point for substrate. Aspartate 197 functions as the Proton donor/acceptor in the catalytic mechanism. ATP contacts are provided by residues glutamate 202, 239–241 (GST), arginine 304, and arginine 310. 2 positions are modified to phosphoserine: serine 340 and serine 408. 502–504 (DGE) lines the ATP pocket.

It depends on Ca(2+) as a cofactor. Mg(2+) is required as a cofactor. High level expression in heart, brain, testis and pancreas; low expression in spleen, liver and lung; not detected in skeletal muscle.

Its subcellular location is the cytoplasm. It is found in the cell membrane. The enzyme catalyses an N-acylsphing-4-enine + ATP = an N-acylsphing-4-enine 1-phosphate + ADP + H(+). The catalysed reaction is N-(hexanoyl)sphing-4-enine + ATP = N-hexanoylsphing-4-enine 1-phosphate + ADP + H(+). It carries out the reaction N-(acetyl)-sphing-4-enine + ATP = N-(acetyl)-sphing-4-enine-1-phosphate + ADP + H(+). It catalyses the reaction N-hexadecanoylsphing-4-enine + ATP = N-(hexadecanoyl)-sphing-4-enine-1-phosphate + ADP + H(+). The enzyme catalyses N-hexanoyl-(4R)-hydroxysphinganine + ATP = N-hexanoyl-(4R)-hydroxysphinganine-1-phosphate + ADP + H(+). Its function is as follows. Catalyzes specifically the phosphorylation of ceramide to form ceramide 1-phosphate. Acts efficiently on natural and analog ceramides (C6, C8, C16 ceramides, and C8-dihydroceramide), to a lesser extent on C2-ceramide and C6-dihydroceramide, but not on other lipids, such as various sphingosines. Shows a greater preference for D-erythro isomer of ceramides. Binds phosphoinositides. The chain is Ceramide kinase (Cerk) from Mus musculus (Mouse).